Reading from the N-terminus, the 193-residue chain is Molybdenum cofactor guanylyltransferase (193 aa).

Residues 8–10 (LAG), K21, D67, and D98 each bind GTP. Position 98 (D98) interacts with Mg(2+).

Belongs to the MobA family. As to quaternary structure, monomer. Mg(2+) serves as cofactor.

Its subcellular location is the cytoplasm. The catalysed reaction is Mo-molybdopterin + GTP + H(+) = Mo-molybdopterin guanine dinucleotide + diphosphate. In terms of biological role, transfers a GMP moiety from GTP to Mo-molybdopterin (Mo-MPT) cofactor (Moco or molybdenum cofactor) to form Mo-molybdopterin guanine dinucleotide (Mo-MGD) cofactor. This Cereibacter sphaeroides (strain ATCC 17029 / ATH 2.4.9) (Rhodobacter sphaeroides) protein is Molybdenum cofactor guanylyltransferase.